Here is a 443-residue protein sequence, read N- to C-terminus: Tubulin beta-3 chain (443 aa).

Residues Gln-11, Glu-69, Ser-138, Gly-142, Thr-143, Gly-144, Asn-204, and Asn-226 each contribute to the GTP site. Glu-69 contacts Mg(2+).

The protein belongs to the tubulin family. As to quaternary structure, dimer of alpha and beta chains. A typical microtubule is a hollow water-filled tube with an outer diameter of 25 nm and an inner diameter of 15 nM. Alpha-beta heterodimers associate head-to-tail to form protofilaments running lengthwise along the microtubule wall with the beta-tubulin subunit facing the microtubule plus end conferring a structural polarity. Microtubules usually have 13 protofilaments but different protofilament numbers can be found in some organisms and specialized cells. Requires Mg(2+) as cofactor.

It is found in the cytoplasm. Its subcellular location is the cytoskeleton. Its function is as follows. Tubulin is the major constituent of microtubules, a cylinder consisting of laterally associated linear protofilaments composed of alpha- and beta-tubulin heterodimers. Microtubules grow by the addition of GTP-tubulin dimers to the microtubule end, where a stabilizing cap forms. Below the cap, tubulin dimers are in GDP-bound state, owing to GTPase activity of alpha-tubulin. This is Tubulin beta-3 chain (TUB-3) from Echinococcus multilocularis (Fox tapeworm).